The primary structure comprises 437 residues: GTPase Der (437 aa).

EngA-type G domains follow at residues 4–167 (PIVA…PDNA) and 175–352 (IHFS…QHHR). GTP-binding positions include 10 to 17 (GRPNVGKS), 57 to 61 (DTGGI), 119 to 122 (NKVD), 181 to 188 (GRPNVGKS), 229 to 233 (DTAGI), and 294 to 297 (NKWD). Residues 353–437 (QRIQSAVLND…PIHLIKRQRQ (85 aa)) enclose the KH-like domain.

The protein belongs to the TRAFAC class TrmE-Era-EngA-EngB-Septin-like GTPase superfamily. EngA (Der) GTPase family. Associates with the 50S ribosomal subunit.

In terms of biological role, GTPase that plays an essential role in the late steps of ribosome biogenesis. The chain is GTPase Der from Limosilactobacillus reuteri (strain DSM 20016) (Lactobacillus reuteri).